We begin with the raw amino-acid sequence, 268 residues long: Glucosamine-6-phosphate deaminase (268 aa).

The active-site Proton acceptor; for enolization step is D72. D141 (for ring-opening step) is an active-site residue. The active-site Proton acceptor; for ring-opening step is the H143. Catalysis depends on E148, which acts as the For ring-opening step.

It belongs to the glucosamine/galactosamine-6-phosphate isomerase family. NagB subfamily.

It carries out the reaction alpha-D-glucosamine 6-phosphate + H2O = beta-D-fructose 6-phosphate + NH4(+). It participates in amino-sugar metabolism; N-acetylneuraminate degradation; D-fructose 6-phosphate from N-acetylneuraminate: step 5/5. Allosterically activated by N-acetylglucosamine 6-phosphate (GlcNAc6P). In terms of biological role, catalyzes the reversible isomerization-deamination of glucosamine 6-phosphate (GlcN6P) to form fructose 6-phosphate (Fru6P) and ammonium ion. The sequence is that of Glucosamine-6-phosphate deaminase from Borrelia garinii subsp. bavariensis (strain ATCC BAA-2496 / DSM 23469 / PBi) (Borreliella bavariensis).